The chain runs to 456 residues: 3-isopropylmalate dehydratase large subunit (456 aa).

Residues C336, C396, and C399 each coordinate [4Fe-4S] cluster.

This sequence belongs to the aconitase/IPM isomerase family. LeuC type 1 subfamily. As to quaternary structure, heterodimer of LeuC and LeuD. It depends on [4Fe-4S] cluster as a cofactor.

It carries out the reaction (2R,3S)-3-isopropylmalate = (2S)-2-isopropylmalate. Its pathway is amino-acid biosynthesis; L-leucine biosynthesis; L-leucine from 3-methyl-2-oxobutanoate: step 2/4. Catalyzes the isomerization between 2-isopropylmalate and 3-isopropylmalate, via the formation of 2-isopropylmaleate. The chain is 3-isopropylmalate dehydratase large subunit from Staphylococcus aureus (strain MW2).